The following is a 254-amino-acid chain: Alcohol dehydrogenase (254 aa).

9–32 is a binding site for NAD(+); the sequence is IFVAGLGGIGLDTSRELVKRDLKN. Position 138 (S138) interacts with substrate. The active-site Proton acceptor is the Y151.

Belongs to the short-chain dehydrogenases/reductases (SDR) family. Homodimer.

The catalysed reaction is a primary alcohol + NAD(+) = an aldehyde + NADH + H(+). The enzyme catalyses a secondary alcohol + NAD(+) = a ketone + NADH + H(+). This Drosophila paulistorum (Fruit fly) protein is Alcohol dehydrogenase (Adh).